Reading from the N-terminus, the 116-residue chain is Ig heavy chain V-A1 region BS-5 (116 aa).

At Gln-1 the chain carries Pyrrolidone carboxylic acid. An Ig-like domain is found at 1-107 (QSVEESGGRL…LVHLAFVDVW (107 aa)).

In Oryctolagus cuniculus (Rabbit), this protein is Ig heavy chain V-A1 region BS-5.